We begin with the raw amino-acid sequence, 369 residues long: Protein RecA (369 aa).

The segment covering 1–10 (MARTTDDSKK) has biased composition (basic and acidic residues). Residues 1-20 (MARTTDDSKKAAPAAGTADE) are disordered. 82–89 (GPESSGKT) provides a ligand contact to ATP. Positions 350–369 (PAAAVAAPDEGDDDLGDEEV) are disordered. Positions 358–369 (DEGDDDLGDEEV) are enriched in acidic residues.

This sequence belongs to the RecA family.

The protein localises to the cytoplasm. Its function is as follows. Can catalyze the hydrolysis of ATP in the presence of single-stranded DNA, the ATP-dependent uptake of single-stranded DNA by duplex DNA, and the ATP-dependent hybridization of homologous single-stranded DNAs. It interacts with LexA causing its activation and leading to its autocatalytic cleavage. In Gloeobacter violaceus (strain ATCC 29082 / PCC 7421), this protein is Protein RecA.